A 162-amino-acid chain; its full sequence is tRNA (cytidine(34)-2'-O)-methyltransferase (162 aa).

S-adenosyl-L-methionine contacts are provided by Leu-83, Gly-105, Ile-127, and Ser-135.

Belongs to the class IV-like SAM-binding methyltransferase superfamily. RNA methyltransferase TrmH family. TrmL subfamily. As to quaternary structure, homodimer.

Its subcellular location is the cytoplasm. It catalyses the reaction cytidine(34) in tRNA + S-adenosyl-L-methionine = 2'-O-methylcytidine(34) in tRNA + S-adenosyl-L-homocysteine + H(+). The catalysed reaction is 5-carboxymethylaminomethyluridine(34) in tRNA(Leu) + S-adenosyl-L-methionine = 5-carboxymethylaminomethyl-2'-O-methyluridine(34) in tRNA(Leu) + S-adenosyl-L-homocysteine + H(+). Its function is as follows. Methylates the ribose at the nucleotide 34 wobble position in the two leucyl isoacceptors tRNA(Leu)(CmAA) and tRNA(Leu)(cmnm5UmAA). Catalyzes the methyl transfer from S-adenosyl-L-methionine to the 2'-OH of the wobble nucleotide. This Yersinia pestis protein is tRNA (cytidine(34)-2'-O)-methyltransferase.